The primary structure comprises 242 residues: Uridylate kinase (242 aa).

16 to 19 contacts ATP; that stretch reads KVSG. Gly-58 serves as a coordination point for UMP. 2 residues coordinate ATP: Gly-59 and Arg-63. Residues Asp-78 and 139–146 contribute to the UMP site; that span reads TGNPFCTT. Residues Thr-166, Gln-167, Tyr-172, and Asp-175 each coordinate ATP.

It belongs to the UMP kinase family. Homohexamer.

The protein localises to the cytoplasm. The catalysed reaction is UMP + ATP = UDP + ADP. It participates in pyrimidine metabolism; CTP biosynthesis via de novo pathway; UDP from UMP (UMPK route): step 1/1. Inhibited by UTP. Functionally, catalyzes the reversible phosphorylation of UMP to UDP. This chain is Uridylate kinase, found in Rickettsia prowazekii (strain Madrid E).